The sequence spans 573 residues: 60 kDa lysophospholipase (573 aa).

Residues R9–D355 form the Asparaginase/glutaminase domain. T19 serves as the catalytic Acyl-ester intermediate. The segment at T41–E350 is asparaginase. Residues D84 to S86 and T116 to D117 each bind substrate. ANK repeat units follow at residues G141–P170, A399–L429, N433–T462, D466–T495, and D533–A562.

In the N-terminal section; belongs to the asparaginase 1 family. As to quaternary structure, monomer.

It carries out the reaction a 1-acyl-sn-glycero-3-phosphocholine + H2O = sn-glycerol 3-phosphocholine + a fatty acid + H(+). The catalysed reaction is L-asparagine + H2O = L-aspartate + NH4(+). It catalyses the reaction a 1-O-alkyl-2-acetyl-sn-glycero-3-phosphocholine + H2O = a 1-O-alkyl-sn-glycero-3-phosphocholine + acetate + H(+). The enzyme catalyses 1-hexadecanoyl-sn-glycero-3-phosphocholine + H2O = sn-glycerol 3-phosphocholine + hexadecanoate + H(+). It carries out the reaction 2 1-hexadecanoyl-sn-glycero-3-phosphocholine = 1,2-dihexadecanoyl-sn-glycero-3-phosphocholine + sn-glycerol 3-phosphocholine. The catalysed reaction is 1-octadecanoyl-sn-glycero-3-phosphocholine + H2O = octadecanoate + sn-glycerol 3-phosphocholine + H(+). It catalyses the reaction 1-(9Z-octadecenoyl)-sn-glycero-3-phosphocholine + H2O = sn-glycerol 3-phosphocholine + (9Z)-octadecenoate + H(+). The enzyme catalyses 1-hexadecanoyl-sn-glycero-3-phosphoethanolamine + H2O = sn-glycero-3-phosphoethanolamine + hexadecanoate + H(+). It carries out the reaction 1-(9Z-octadecenoyl)-sn-glycero-3-phosphoethanolamine + H2O = sn-glycero-3-phosphoethanolamine + (9Z)-octadecenoate + H(+). The catalysed reaction is 1-hexadecanoyl-sn-glycero-3-phosphoethanolamine + 1-hexadecanoyl-sn-glycero-3-phosphocholine = 1,2-dihexadecanoyl-sn-glycero-3-phosphoethanolamine + sn-glycerol 3-phosphocholine. It catalyses the reaction 2-(5Z,8Z,11Z,14Z)-eicosatetraenoyl-sn-glycero-3-phosphocholine + H2O = sn-glycerol 3-phosphocholine + (5Z,8Z,11Z,14Z)-eicosatetraenoate + H(+). The enzyme catalyses 2-hexadecanoyl-sn-glycero-3-phosphocholine + H2O = sn-glycerol 3-phosphocholine + hexadecanoate + H(+). It carries out the reaction 2 2-hexadecanoyl-sn-glycero-3-phosphocholine = 1,2-dihexadecanoyl-sn-glycero-3-phosphocholine + sn-glycerol 3-phosphocholine. The catalysed reaction is 1-O-(9Z)-octadecenoyl-2-O-acetyl-sn-glycero-3-phosphocholine + H2O = 2-acetyl-sn-glycero-3-phosphocholine + (9Z)-octadecenoate + H(+). It catalyses the reaction a 1-acyl-sn-glycero-3-phospho-(1D-myo-inositol) + 1-hexadecanoyl-sn-glycero-3-phosphocholine = a 1-acyl-2-hexadecanoyl-sn-glycero-3-phospho-(1D-myo-inositol) + sn-glycerol 3-phosphocholine. The enzyme catalyses 2 2-(5Z,8Z,11Z,14Z)-eicosatetraenoyl-sn-glycero-3-phosphocholine = 1,2-di-(5Z,8Z,11Z,14Z-eicosatetraenoyl)-sn-glycero-3-phosphocholine + sn-glycerol 3-phosphocholine. Exhibits lysophospholipase, transacylase, PAF acetylhydrolase and asparaginase activities. Can catalyze three types of transacylation reactions: (1) acyl transfer from 1-acyl-sn-glycero-3-phosphocholine (1-acyl-GPC) to the sn-1(3) positions of glycerol and 2-acylglycerol (sn-1 to -1(3) transfer), (2) acyl transfer from 1-acyl-GPC to the sn-2 positions of 1-acyl-GPC, 1-acyl-sn-glycero-3-phosphoethanolamine (1-acyl-GPE), and other lysophospholipids (sn-1 to -2 transfer) and (3) acyl transfer from 2-acyl-GPC to the sn-1 position of 2-acyl-GPC and 2-acyl-GPE (sn-2 to -1 transfer). Mediates the synthesis of 1-arachidonoyl species of phospholipids by transferring the arachidonoyl residue from 2-arachidonoyl lysophospholipid to the sn-1 position of 2-acyl lysophospholipid. This is 60 kDa lysophospholipase (ASPG) from Homo sapiens (Human).